A 300-amino-acid chain; its full sequence is Bifunctional protein FolD 2 (300 aa).

Residues 165–167 (GRS), Ser-190, and Ile-231 each bind NADP(+).

Belongs to the tetrahydrofolate dehydrogenase/cyclohydrolase family. As to quaternary structure, homodimer.

The enzyme catalyses (6R)-5,10-methylene-5,6,7,8-tetrahydrofolate + NADP(+) = (6R)-5,10-methenyltetrahydrofolate + NADPH. It carries out the reaction (6R)-5,10-methenyltetrahydrofolate + H2O = (6R)-10-formyltetrahydrofolate + H(+). Its pathway is one-carbon metabolism; tetrahydrofolate interconversion. Catalyzes the oxidation of 5,10-methylenetetrahydrofolate to 5,10-methenyltetrahydrofolate and then the hydrolysis of 5,10-methenyltetrahydrofolate to 10-formyltetrahydrofolate. The polypeptide is Bifunctional protein FolD 2 (Pseudomonas syringae pv. syringae (strain B728a)).